The primary structure comprises 326 residues: MRFTPLFLLAAVAIASPAPDLNARHELTRRQASESCPIGYCTQNGGTTGGAAGDTVTVTNLADLTEAAESDGPLTIIVSGSISGSAKIRVASDKTIFGESGSSITGIGFYIRRVSNVIMRNLKISKVDADNGDAIGIDASSNVWVDHCDLSGDLSGGKDDLDGLVDISHGAEWITVSNTYFHDHWKGSLIGHSDNNEDEDLGHLHVTYANNYWYNVYSRTPLIRFATVHIINNYWDSLIDTGVNCRMDAQVLIQSSAFHNCPDRAIFFADSDYTGYAVVDDVDLGGSSNSVPEGTLTPSSLPYAAITALGSGQVASVIPGTAGQKL.

The N-terminal stretch at 1–15 is a signal peptide; that stretch reads MRFTPLFLLAAVAIA. Ca(2+)-binding residues include D133, D162, and D166. R219 is an active-site residue.

It belongs to the polysaccharide lyase 1 family. The cofactor is Ca(2+).

The protein resides in the secreted. It catalyses the reaction Eliminative cleavage of (1-&gt;4)-alpha-D-galacturonan to give oligosaccharides with 4-deoxy-alpha-D-galact-4-enuronosyl groups at their non-reducing ends.. It functions in the pathway glycan metabolism; pectin degradation; 2-dehydro-3-deoxy-D-gluconate from pectin: step 2/5. Functionally, pectinolytic enzyme consist of four classes of enzymes: pectin lyase, polygalacturonase, pectin methylesterase and rhamnogalacturonase. Among pectinolytic enzymes, pectin lyase is the most important in depolymerization of pectin, since it cleaves internal glycosidic bonds of highly methylated pectins. This is Pectate lyase plyB (plyB) from Emericella nidulans (strain FGSC A4 / ATCC 38163 / CBS 112.46 / NRRL 194 / M139) (Aspergillus nidulans).